We begin with the raw amino-acid sequence, 186 residues long: UPF0301 protein Sfri_2850 (186 aa).

The protein belongs to the UPF0301 (AlgH) family.

This chain is UPF0301 protein Sfri_2850, found in Shewanella frigidimarina (strain NCIMB 400).